A 356-amino-acid polypeptide reads, in one-letter code: Proline-rich protein 19 (356 aa).

Residues 1–12 (MDTQGPVSQPFQ) show a composition bias toward polar residues. Disordered stretches follow at residues 1 to 53 (MDTQ…RDPP), 95 to 143 (LVPG…ELSG), 216 to 255 (INSP…RGSL), and 312 to 331 (PSSP…SPPS). Residues 19–29 (RVRRRKTRRER) show a composition bias toward basic residues.

As to quaternary structure, interacts with CNTD1.

Its subcellular location is the nucleus. The protein localises to the chromosome. In terms of biological role, promotes meiotic crossing over formation through its interaction with CNTD1 by participating in the crossover differentiation step of crossover-specific recombination intermediates. In Homo sapiens (Human), this protein is Proline-rich protein 19.